Consider the following 210-residue polypeptide: Na(+)-translocating NADH-quinone reductase subunit D (210 aa).

Helical transmembrane passes span 14–34 (PIINNNPIALQILGVCSALAV), 42–62 (LVMSLALTVVTAFSNLFISLI), 72–92 (IIVQMTIIASLVIVVDQVLQA), 96–116 (EIAKQLSVFVGLIITNCIVMG), 131–151 (FMDGIGNGLGYGAILLGVGFF), and 178–198 (NGLLLLPPSAFFLIGGLIWVI).

This sequence belongs to the NqrDE/RnfAE family. Composed of six subunits; NqrA, NqrB, NqrC, NqrD, NqrE and NqrF.

The protein localises to the cell inner membrane. It catalyses the reaction a ubiquinone + n Na(+)(in) + NADH + H(+) = a ubiquinol + n Na(+)(out) + NAD(+). Its function is as follows. NQR complex catalyzes the reduction of ubiquinone-1 to ubiquinol by two successive reactions, coupled with the transport of Na(+) ions from the cytoplasm to the periplasm. NqrA to NqrE are probably involved in the second step, the conversion of ubisemiquinone to ubiquinol. The protein is Na(+)-translocating NADH-quinone reductase subunit D of Shewanella denitrificans (strain OS217 / ATCC BAA-1090 / DSM 15013).